Here is a 264-residue protein sequence, read N- to C-terminus: Thymidylate synthase (264 aa).

Arg21 serves as a coordination point for dUMP. His51 serves as a coordination point for (6R)-5,10-methylene-5,6,7,8-tetrahydrofolate. Residue 126-127 (RR) coordinates dUMP. The active-site Nucleophile is the Cys146. DUMP contacts are provided by residues 166–169 (RSAD), Asn177, and 207–209 (HLY). A (6R)-5,10-methylene-5,6,7,8-tetrahydrofolate-binding site is contributed by Asp169. Ser263 provides a ligand contact to (6R)-5,10-methylene-5,6,7,8-tetrahydrofolate.

The protein belongs to the thymidylate synthase family. Bacterial-type ThyA subfamily. In terms of assembly, homodimer.

Its subcellular location is the cytoplasm. It catalyses the reaction dUMP + (6R)-5,10-methylene-5,6,7,8-tetrahydrofolate = 7,8-dihydrofolate + dTMP. It functions in the pathway pyrimidine metabolism; dTTP biosynthesis. Functionally, catalyzes the reductive methylation of 2'-deoxyuridine-5'-monophosphate (dUMP) to 2'-deoxythymidine-5'-monophosphate (dTMP) while utilizing 5,10-methylenetetrahydrofolate (mTHF) as the methyl donor and reductant in the reaction, yielding dihydrofolate (DHF) as a by-product. This enzymatic reaction provides an intracellular de novo source of dTMP, an essential precursor for DNA biosynthesis. The chain is Thymidylate synthase from Neisseria meningitidis serogroup C / serotype 2a (strain ATCC 700532 / DSM 15464 / FAM18).